A 135-amino-acid polypeptide reads, in one-letter code: MALTLRVLCPDQNVFDGQADEVILPSTTGQLGVLPGHVSLLTALDVGVLRMRDGNQWTAIALMGGFAEVDDDEVSVLVNAAEPASGINAEEAQKQLSEAEQAWSKFDGQPNSPDKIKAQQAFQKARARLQATKAN.

Residues 91–122 (EAQKQLSEAEQAWSKFDGQPNSPDKIKAQQAF) are disordered.

It belongs to the ATPase epsilon chain family. F-type ATPases have 2 components, CF(1) - the catalytic core - and CF(0) - the membrane proton channel. CF(1) has five subunits: alpha(3), beta(3), gamma(1), delta(1), epsilon(1). CF(0) has three main subunits: a, b and c.

The protein resides in the cellular thylakoid membrane. Its function is as follows. Produces ATP from ADP in the presence of a proton gradient across the membrane. This chain is ATP synthase epsilon chain, found in Synechococcus sp. (strain RCC307).